A 679-amino-acid polypeptide reads, in one-letter code: DNA ligase (679 aa).

NAD(+) is bound by residues 36-40 (DAQYD), 85-86 (SL), and glutamate 116. The N6-AMP-lysine intermediate role is filled by lysine 118. NAD(+) contacts are provided by arginine 139, glutamate 174, lysine 300, and lysine 324. 4 residues coordinate Zn(2+): cysteine 418, cysteine 421, cysteine 436, and cysteine 441. Residues 600–679 (EGGGPLNGKV…NEFRELTGRK (80 aa)) enclose the BRCT domain.

It belongs to the NAD-dependent DNA ligase family. LigA subfamily. Requires Mg(2+) as cofactor. It depends on Mn(2+) as a cofactor.

It carries out the reaction NAD(+) + (deoxyribonucleotide)n-3'-hydroxyl + 5'-phospho-(deoxyribonucleotide)m = (deoxyribonucleotide)n+m + AMP + beta-nicotinamide D-nucleotide.. Its function is as follows. DNA ligase that catalyzes the formation of phosphodiester linkages between 5'-phosphoryl and 3'-hydroxyl groups in double-stranded DNA using NAD as a coenzyme and as the energy source for the reaction. It is essential for DNA replication and repair of damaged DNA. This Pelotomaculum thermopropionicum (strain DSM 13744 / JCM 10971 / SI) protein is DNA ligase.